The following is a 317-amino-acid chain: Transaldolase (317 aa).

Lys132 acts as the Schiff-base intermediate with substrate in catalysis.

It belongs to the transaldolase family. Type 1 subfamily. As to quaternary structure, homodimer.

The protein localises to the cytoplasm. It carries out the reaction D-sedoheptulose 7-phosphate + D-glyceraldehyde 3-phosphate = D-erythrose 4-phosphate + beta-D-fructose 6-phosphate. Its pathway is carbohydrate degradation; pentose phosphate pathway; D-glyceraldehyde 3-phosphate and beta-D-fructose 6-phosphate from D-ribose 5-phosphate and D-xylulose 5-phosphate (non-oxidative stage): step 2/3. Functionally, transaldolase is important for the balance of metabolites in the pentose-phosphate pathway. This is Transaldolase from Haemophilus influenzae (strain PittGG).